The sequence spans 472 residues: ATP-dependent rRNA helicase rrp3 (472 aa).

Residues 1–52 (MPAIKKRKIAREAPQQEDHSDSEAHSSASEDAAPNTTEQEQEPSEAPKQAPK) are disordered. A compositionally biased stretch (basic and acidic residues) spans 10–24 (AREAPQQEDHSDSEA). Positions 52–80 (KSFKELGLIEQLCEACDSMGYKAPTAIQA) match the Q motif motif. The Helicase ATP-binding domain maps to 83-254 (IPLALQGRDL…RASLQNPLRV (172 aa)). Residue 96-103 (AETGSGKT) coordinates ATP. The DEAD box signature appears at 202–205 (DEAD). The Helicase C-terminal domain occupies 282–426 (YLVYLLNEFV…EYPAEKDEVM (145 aa)). The tract at residues 443 to 472 (MKNYDEKKGSRGKKFAKGKRSREDMDQEEG) is disordered. The segment covering 452 to 462 (SRGKKFAKGKR) has biased composition (basic residues).

It belongs to the DEAD box helicase family. DDX47/RRP3 subfamily. As to quaternary structure, interacts with the SSU processome.

The protein localises to the nucleus. The catalysed reaction is ATP + H2O = ADP + phosphate + H(+). ATP-dependent rRNA helicase required for pre-ribosomal RNA processing. Involved in the maturation of the 35S-pre-rRNA and to its cleavage to mature 18S rRNA. The chain is ATP-dependent rRNA helicase rrp3 from Aspergillus oryzae (strain ATCC 42149 / RIB 40) (Yellow koji mold).